The following is a 207-amino-acid chain: Large ribosomal subunit protein uL4 (207 aa).

The interval 58–78 is disordered; that stretch reads AGGGKKPWRQKGTGRARHGSI. Residues 63-77 show a composition bias toward basic residues; the sequence is KPWRQKGTGRARHGS.

This sequence belongs to the universal ribosomal protein uL4 family. Part of the 50S ribosomal subunit.

In terms of biological role, one of the primary rRNA binding proteins, this protein initially binds near the 5'-end of the 23S rRNA. It is important during the early stages of 50S assembly. It makes multiple contacts with different domains of the 23S rRNA in the assembled 50S subunit and ribosome. Its function is as follows. Forms part of the polypeptide exit tunnel. The chain is Large ribosomal subunit protein uL4 from Aster yellows witches'-broom phytoplasma (strain AYWB).